A 145-amino-acid polypeptide reads, in one-letter code: MRRLLDFLRRGLIRPDPRHAQGKRAEAQGLRLLRAQGLRLLARNARNRHGELDLIMLDGEVLVVVEVRWRSGSAFGGAAASIGPAKQARLARAAACWLAGSEHAGRRLRFDVLAFEAGQARWLRGAFEPPAYIASQALRARGRRR.

It belongs to the UPF0102 family.

This chain is UPF0102 protein BAV3162, found in Bordetella avium (strain 197N).